A 139-amino-acid chain; its full sequence is D-ribose pyranase (139 aa).

Residue histidine 20 is the Proton donor of the active site. Substrate contacts are provided by residues aspartate 28, histidine 106, and 128–130 (YAN).

Belongs to the RbsD / FucU family. RbsD subfamily. As to quaternary structure, homodecamer.

The protein resides in the cytoplasm. It carries out the reaction beta-D-ribopyranose = beta-D-ribofuranose. It functions in the pathway carbohydrate metabolism; D-ribose degradation; D-ribose 5-phosphate from beta-D-ribopyranose: step 1/2. In terms of biological role, catalyzes the interconversion of beta-pyran and beta-furan forms of D-ribose. This is D-ribose pyranase from Cronobacter sakazakii (strain ATCC BAA-894) (Enterobacter sakazakii).